The following is an 807-amino-acid chain: Putative histidine biosynthesis bifunctional protein HisCD (807 aa).

A histidinol dehydrogenase region spans residues 1–440; the sequence is MTDHFDTLIR…ALNIAGQGVN (440 aa). Gln-261 and His-264 together coordinate Zn(2+). Catalysis depends on residues Glu-328 and His-329. Positions 362 and 421 each coordinate Zn(2+). The segment at 441 to 807 is histidinol-phosphate aminotransferase; it reads MNNIFDANLL…VNEQPKEIAN (367 aa). At Lys-655 the chain carries N6-(pyridoxal phosphate)lysine.

In the N-terminal section; belongs to the histidinol dehydrogenase family. This sequence in the C-terminal section; belongs to the class-II pyridoxal-phosphate-dependent aminotransferase family. Histidinol-phosphate aminotransferase subfamily. As to quaternary structure, homodimer. Zn(2+) serves as cofactor. It depends on pyridoxal 5'-phosphate as a cofactor.

It catalyses the reaction L-histidinol phosphate + 2-oxoglutarate = 3-(imidazol-4-yl)-2-oxopropyl phosphate + L-glutamate. The enzyme catalyses L-histidinol + 2 NAD(+) + H2O = L-histidine + 2 NADH + 3 H(+). It participates in amino-acid biosynthesis; L-histidine biosynthesis; L-histidine from 5-phospho-alpha-D-ribose 1-diphosphate: step 7/9. Its pathway is amino-acid biosynthesis; L-histidine biosynthesis; L-histidine from 5-phospho-alpha-D-ribose 1-diphosphate: step 9/9. Its function is as follows. Catalyzes the sequential NAD-dependent oxidations of L-histidinol to L-histidinaldehyde and then to L-histidine. This Photorhabdus laumondii subsp. laumondii (strain DSM 15139 / CIP 105565 / TT01) (Photorhabdus luminescens subsp. laumondii) protein is Putative histidine biosynthesis bifunctional protein HisCD (hisCD).